Reading from the N-terminus, the 462-residue chain is Bifunctional dihydrofolate reductase-thymidylate synthase (462 aa).

The 160-residue stretch at 6–165 folds into the DHFR domain; sequence TFSMVLAMTL…INYDYQHLIN (160 aa). Val-10 is a substrate binding site. NADP(+) is bound by residues Ala-12 and 18-24; that span reads GIGYQNR. Position 32 (Asp-32) interacts with substrate. Residues 49–51 and 68–71 each bind NADP(+); these read RKT and ISKN. Residue Ile-101 coordinates substrate. 102 to 109 serves as a coordination point for NADP(+); the sequence is GGKRIFEE. Thr-122 lines the substrate pocket. A thymidylate synthase region spans residues 180-462; that stretch reads ENQYLDMITK…HDKIEMKMAV (283 aa). Arg-200 lines the dUMP pocket. Cys-345 is a catalytic residue. Residues His-346, 364–368, Asn-376, and 406–408 contribute to the dUMP site; these read QRSCD and HIY.

It in the N-terminal section; belongs to the dihydrofolate reductase family. In the C-terminal section; belongs to the thymidylate synthase family.

It catalyses the reaction (6S)-5,6,7,8-tetrahydrofolate + NADP(+) = 7,8-dihydrofolate + NADPH + H(+). It carries out the reaction dUMP + (6R)-5,10-methylene-5,6,7,8-tetrahydrofolate = 7,8-dihydrofolate + dTMP. The protein operates within cofactor biosynthesis; tetrahydrofolate biosynthesis; 5,6,7,8-tetrahydrofolate from 7,8-dihydrofolate: step 1/1. Its function is as follows. Bifunctional enzyme. Involved in de novo dTMP biosynthesis. Key enzyme in folate metabolism. Catalyzes an essential reaction for de novo glycine and purine synthesis, DNA precursor synthesis, and for the conversion of dUMP to dTMP. This chain is Bifunctional dihydrofolate reductase-thymidylate synthase, found in Paramecium tetraurelia.